The chain runs to 236 residues: Small ribosomal subunit protein uS2c (236 aa).

The protein belongs to the universal ribosomal protein uS2 family.

The protein resides in the plastid. It localises to the chloroplast. This Cucumis sativus (Cucumber) protein is Small ribosomal subunit protein uS2c (rps2).